Here is a 323-residue protein sequence, read N- to C-terminus: Zinc finger protein 784 (323 aa).

Positions 1 to 26 (MAAARPEAQSRSSPTPESRSQEPLDL) are disordered. The segment covering 9-18 (QSRSSPTPES) has biased composition (polar residues). Position 13 is a phosphoserine (S13). 6 C2H2-type zinc fingers span residues 65–87 (FHCA…EHGH), 101–123 (SRCH…YSLH), 129–151 (YRCA…QHRH), 196–218 (FACR…ERVH), 224–246 (YHCG…ARIH), and 252–274 (FRCT…QRTH). Residues 269-323 (KHQRTHFHGPGPGLGDSGGQLGSSAAEGSGSGCGVGDPAEEGRGETAKVKVEADQ) are disordered. A compositionally biased stretch (gly residues) spans 278-289 (PGPGLGDSGGQL). The segment covering 308-323 (EEGRGETAKVKVEADQ) has biased composition (basic and acidic residues). Residue K318 forms a Glycyl lysine isopeptide (Lys-Gly) (interchain with G-Cter in SUMO2) linkage.

The protein belongs to the krueppel C2H2-type zinc-finger protein family.

It is found in the nucleus. In terms of biological role, may be involved in transcriptional regulation. The sequence is that of Zinc finger protein 784 (ZNF784) from Homo sapiens (Human).